Here is a 234-residue protein sequence, read N- to C-terminus: Large ribosomal subunit protein uL1 (234 aa).

This sequence belongs to the universal ribosomal protein uL1 family. Part of the 50S ribosomal subunit.

In terms of biological role, binds directly to 23S rRNA. The L1 stalk is quite mobile in the ribosome, and is involved in E site tRNA release. Functionally, protein L1 is also a translational repressor protein, it controls the translation of the L11 operon by binding to its mRNA. In Erwinia tasmaniensis (strain DSM 17950 / CFBP 7177 / CIP 109463 / NCPPB 4357 / Et1/99), this protein is Large ribosomal subunit protein uL1.